The primary structure comprises 432 residues: Metacaspase-1 (432 aa).

The span at 1–11 shows a compositional bias: basic residues; sequence MEVMDHHHHTS. Disordered stretches follow at residues 1 to 21 and 41 to 87; these read MEVM…TTRR and PQPG…PNAP. Low complexity predominate over residues 12-21; sequence STRPNPTTRR. Over residues 46-74 the composition is skewed to pro residues; that stretch reads GAPPPQGGYGYPQPPPPQQPYGYSQPPPQ. Active-site residues include His223 and Cys279.

The protein belongs to the peptidase C14B family.

Functionally, involved in cell death (apoptosis). The sequence is that of Metacaspase-1 (casA) from Sclerotinia sclerotiorum (strain ATCC 18683 / 1980 / Ss-1) (White mold).